A 114-amino-acid chain; its full sequence is T cell receptor beta variable 6-9 (114 aa).

Positions 1–21 (MSIGLLCCVAFSLLWAGPVNA) are cleaved as a signal peptide. An Ig-like domain is found at 22-114 (GVTQTPKFHI…TSVYFCASSY (93 aa)). The cysteines at positions 42 and 110 are disulfide-linked. Asparagine 84 carries N-linked (GlcNAc...) asparagine glycosylation.

Alpha-beta TR is a heterodimer composed of an alpha and beta chain; disulfide-linked. The alpha-beta TR is associated with the transmembrane signaling CD3 coreceptor proteins to form the TR-CD3 (TcR or TCR). The assembly of alpha-beta TR heterodimers with CD3 occurs in the endoplasmic reticulum where a single alpha-beta TR heterodimer associates with one CD3D-CD3E heterodimer, one CD3G-CD3E heterodimer and one CD247 homodimer forming a stable octameric structure. CD3D-CD3E and CD3G-CD3E heterodimers preferentially associate with TR alpha and TR beta chains, respectively. The association of the CD247 homodimer is the last step of TcR assembly in the endoplasmic reticulum and is required for transport to the cell surface.

Its subcellular location is the cell membrane. Functionally, v region of the variable domain of T cell receptor (TR) beta chain that participates in the antigen recognition. Alpha-beta T cell receptors are antigen specific receptors which are essential to the immune response and are present on the cell surface of T lymphocytes. Recognize peptide-major histocompatibility (MH) (pMH) complexes that are displayed by antigen presenting cells (APC), a prerequisite for efficient T cell adaptive immunity against pathogens. Binding of alpha-beta TR to pMH complex initiates TR-CD3 clustering on the cell surface and intracellular activation of LCK that phosphorylates the ITAM motifs of CD3G, CD3D, CD3E and CD247 enabling the recruitment of ZAP70. In turn ZAP70 phosphorylates LAT, which recruits numerous signaling molecules to form the LAT signalosome. The LAT signalosome propagates signal branching to three major signaling pathways, the calcium, the mitogen-activated protein kinase (MAPK) kinase and the nuclear factor NF-kappa-B (NF-kB) pathways, leading to the mobilization of transcription factors that are critical for gene expression and essential for T cell growth and differentiation. The T cell repertoire is generated in the thymus, by V-(D)-J rearrangement. This repertoire is then shaped by intrathymic selection events to generate a peripheral T cell pool of self-MH restricted, non-autoaggressive T cells. Post-thymic interaction of alpha-beta TR with the pMH complexes shapes TR structural and functional avidity. The chain is T cell receptor beta variable 6-9 from Homo sapiens (Human).